A 523-amino-acid chain; its full sequence is MSTDDGRRPIRRALISVYDKTGLVDLAQGLSAAGVEIISTGSTAKTIADTGIPVTPVEQLTGFPEVLDGRVKTLHPRVHAGLLADLRKSEHAAALEQLGIEAFELVVVNLYPFSQTVESGASVDDCVEQIDIGGPAMVRAAAKNHPSAAVVTDPLGYHGVLAALRAGGFTLAERKRLASLAFQHIAEYDIAVASWMQQTLAPEHPVAAFPQWFGRSWRRVAMLRYGENPHQQAALYGDPTAWPGLAQAEQLHGKDMSYNNFTDADAAWRAAFDHEQTCVAIIKHANPCGIAISSVSVADAHRKAHECDPLSAYGGVIAANTEVSVEMAEYVSTIFTEVIVAPGYAPGALDVLARKKNIRVLVAAEPLAGGSELRPISGGLLIQQSDQLDAHGDNPANWTLATGSPADPATLTDLVFAWRACRAVKSNAIVIAADGATVGVGMGQVNRVDAARLAVERGGERVRGAVAASDAFFPFPDGLETLAAAGVTAVVHPGGSVRDEEVTEAAAKAGVTLYLTGARHFAH.

Positions 1–152 constitute an MGS-like domain; sequence MSTDDGRRPI…KNHPSAAVVT (152 aa).

The protein belongs to the PurH family.

The enzyme catalyses (6R)-10-formyltetrahydrofolate + 5-amino-1-(5-phospho-beta-D-ribosyl)imidazole-4-carboxamide = 5-formamido-1-(5-phospho-D-ribosyl)imidazole-4-carboxamide + (6S)-5,6,7,8-tetrahydrofolate. The catalysed reaction is IMP + H2O = 5-formamido-1-(5-phospho-D-ribosyl)imidazole-4-carboxamide. It functions in the pathway purine metabolism; IMP biosynthesis via de novo pathway; 5-formamido-1-(5-phospho-D-ribosyl)imidazole-4-carboxamide from 5-amino-1-(5-phospho-D-ribosyl)imidazole-4-carboxamide (10-formyl THF route): step 1/1. The protein operates within purine metabolism; IMP biosynthesis via de novo pathway; IMP from 5-formamido-1-(5-phospho-D-ribosyl)imidazole-4-carboxamide: step 1/1. The sequence is that of Bifunctional purine biosynthesis protein PurH from Mycobacterium bovis (strain BCG / Pasteur 1173P2).